Reading from the N-terminus, the 359-residue chain is Phosphate acyltransferase (359 aa).

Positions 335-359 (SGAGGAATGSPETDAPNPHPDSRAA) are disordered.

Belongs to the PlsX family. In terms of assembly, homodimer. Probably interacts with PlsY.

The protein localises to the cytoplasm. The enzyme catalyses a fatty acyl-[ACP] + phosphate = an acyl phosphate + holo-[ACP]. It functions in the pathway lipid metabolism; phospholipid metabolism. Catalyzes the reversible formation of acyl-phosphate (acyl-PO(4)) from acyl-[acyl-carrier-protein] (acyl-ACP). This enzyme utilizes acyl-ACP as fatty acyl donor, but not acyl-CoA. The sequence is that of Phosphate acyltransferase from Cupriavidus metallidurans (strain ATCC 43123 / DSM 2839 / NBRC 102507 / CH34) (Ralstonia metallidurans).